The primary structure comprises 248 residues: MIELGVNIDHVATLRQQRHTAYPDPVQAALRAEDAGADLITLHLREDRRHIQDADVYAIRPLLRTRMNLECAVTPEMLEIACAVKPSDVCLVPEKRTELTTEGGLDVAGAQAAVTDAVQLLAEAGIRVSLFIDPDARQIEAAARAGAPVIELHTGAYAEARDDAAVQAELARVRAAVAEGLRHGLRVNAGHGLHYGNVQAVAALDGIAELNIGHAIVAQSIFDGWDKAVRDMKALMVQARLAAVRGHA.

Asparagine 7 contacts 3-amino-2-oxopropyl phosphate. 9 to 10 (DH) contributes to the 1-deoxy-D-xylulose 5-phosphate binding site. Position 18 (arginine 18) interacts with 3-amino-2-oxopropyl phosphate. Histidine 43 acts as the Proton acceptor in catalysis. Residues arginine 45 and histidine 50 each contribute to the 1-deoxy-D-xylulose 5-phosphate site. Glutamate 70 functions as the Proton acceptor in the catalytic mechanism. Threonine 100 contacts 1-deoxy-D-xylulose 5-phosphate. The active-site Proton donor is the histidine 191. Residues glycine 192 and 213 to 214 (GH) each bind 3-amino-2-oxopropyl phosphate.

It belongs to the PNP synthase family. As to quaternary structure, homooctamer; tetramer of dimers.

The protein resides in the cytoplasm. The enzyme catalyses 3-amino-2-oxopropyl phosphate + 1-deoxy-D-xylulose 5-phosphate = pyridoxine 5'-phosphate + phosphate + 2 H2O + H(+). The protein operates within cofactor biosynthesis; pyridoxine 5'-phosphate biosynthesis; pyridoxine 5'-phosphate from D-erythrose 4-phosphate: step 5/5. Functionally, catalyzes the complicated ring closure reaction between the two acyclic compounds 1-deoxy-D-xylulose-5-phosphate (DXP) and 3-amino-2-oxopropyl phosphate (1-amino-acetone-3-phosphate or AAP) to form pyridoxine 5'-phosphate (PNP) and inorganic phosphate. The protein is Pyridoxine 5'-phosphate synthase of Bordetella bronchiseptica (strain ATCC BAA-588 / NCTC 13252 / RB50) (Alcaligenes bronchisepticus).